The chain runs to 409 residues: Inner membrane transport protein YqeG (409 aa).

At 1 to 25 (MSNIWSKEETLWSFALYGTAVGAGT) the chain is on the periplasmic side. A helical membrane pass occupies residues 26-46 (LFLPIQLGSAGAVVLFITALV). Over 47–87 (AWPLTYWPHKALCQFILSSKTSAGEGITGAVTHYYGKKIGN) the chain is Cytoplasmic. The helical transmembrane segment at 88-108 (LITTLYFIAFFVVVLIYAVAI) threads the bilayer. The Periplasmic segment spans residues 109 to 127 (TNSLTEQLAKHMVIDLRIR). A helical transmembrane segment spans residues 128–148 (MLVSLGVVLILNLIFLMGRHA). The Cytoplasmic portion of the chain corresponds to 149–151 (TIR). Residues 152–172 (VMGFLVFPLIAYFLFLSIYLV) form a helical membrane-spanning segment. The Periplasmic portion of the chain corresponds to 173 to 193 (GSWQPDLLTTQVEFNQNTLHQ). The helical transmembrane segment at 194–214 (IWISIPVMVFAFSHTPIISTF) threads the bilayer. At 215 to 235 (AIDRREKYGEHAMDKCKKIMK) the chain is on the cytoplasmic side. The chain crosses the membrane as a helical span at residues 236–256 (VAYLIICISVLFFVFSCLLSI). Residues 257 to 276 (PPSYIEAAKEEGVTILSALS) are Periplasmic-facing. Residues 277–297 (MLPNAPAWLSISGIIVAVVAM) form a helical membrane-spanning segment. The Cytoplasmic segment spans residues 298 to 329 (SKSFLGTYFGVIEGATEVVKTTLQQVGVKKSR). Residues 330–350 (AFNRALSIMLVSLITFIVCCI) traverse the membrane as a helical segment. Residues 351 to 353 (NPN) lie on the Periplasmic side of the membrane. The helical transmembrane segment at 354–374 (AISMIYAISGPLIAMILFIMP) threads the bilayer. The Cytoplasmic portion of the chain corresponds to 375–388 (TLSTYLIPALKPWR). A helical membrane pass occupies residues 389–409 (SIGNLITLIVGILCVSVMFFS).

It belongs to the amino acid/polyamine transporter 2 family. SdaC/TdcC subfamily.

The protein resides in the cell inner membrane. The polypeptide is Inner membrane transport protein YqeG (yqeG) (Escherichia coli O6:H1 (strain CFT073 / ATCC 700928 / UPEC)).